The following is a 294-amino-acid chain: Indole-3-glycerol phosphate synthase (294 aa).

It belongs to the TrpC family.

It catalyses the reaction 1-(2-carboxyphenylamino)-1-deoxy-D-ribulose 5-phosphate + H(+) = (1S,2R)-1-C-(indol-3-yl)glycerol 3-phosphate + CO2 + H2O. It participates in amino-acid biosynthesis; L-tryptophan biosynthesis; L-tryptophan from chorismate: step 4/5. The polypeptide is Indole-3-glycerol phosphate synthase (Synechococcus sp. (strain CC9902)).